The primary structure comprises 146 residues: 3-dehydroquinate dehydratase (146 aa).

Y22 acts as the Proton acceptor in catalysis. Substrate is bound by residues N73, H79, and D86. H99 acts as the Proton donor in catalysis. Substrate-binding positions include 100–101 (LS) and R110.

It belongs to the type-II 3-dehydroquinase family. Homododecamer.

The enzyme catalyses 3-dehydroquinate = 3-dehydroshikimate + H2O. Its pathway is metabolic intermediate biosynthesis; chorismate biosynthesis; chorismate from D-erythrose 4-phosphate and phosphoenolpyruvate: step 3/7. In terms of biological role, catalyzes a trans-dehydration via an enolate intermediate. The protein is 3-dehydroquinate dehydratase of Synechococcus sp. (strain CC9605).